Here is a 78-residue protein sequence, read N- to C-terminus: Acyl carrier protein (78 aa).

One can recognise a Carrier domain in the interval S2–K77. S37 bears the O-(pantetheine 4'-phosphoryl)serine mark.

This sequence belongs to the acyl carrier protein (ACP) family. 4'-phosphopantetheine is transferred from CoA to a specific serine of apo-ACP by AcpS. This modification is essential for activity because fatty acids are bound in thioester linkage to the sulfhydryl of the prosthetic group.

The protein localises to the cytoplasm. The protein operates within lipid metabolism; fatty acid biosynthesis. Functionally, carrier of the growing fatty acid chain in fatty acid biosynthesis. This is Acyl carrier protein from Flavobacterium johnsoniae (strain ATCC 17061 / DSM 2064 / JCM 8514 / BCRC 14874 / CCUG 350202 / NBRC 14942 / NCIMB 11054 / UW101) (Cytophaga johnsonae).